Reading from the N-terminus, the 642-residue chain is Assimilatory sulfite reductase (ferredoxin), chloroplastic (642 aa).

The N-terminal 61 residues, 1-61 (MSSTFRAPAG…SSSSSSPIQA (61 aa)), are a transit peptide targeting the chloroplast. Residues 46–74 (PVPPSASSSSSSPIQAVSTPAKPETATKR) are disordered. [4Fe-4S] cluster is bound by residues Cys-503, Cys-509, Cys-549, and Cys-553. Cys-553 is a binding site for siroheme.

The protein belongs to the nitrite and sulfite reductase 4Fe-4S domain family. In terms of assembly, monomer. Interacts with ferredoxin. It depends on siroheme as a cofactor. [4Fe-4S] cluster serves as cofactor. Phosphorylated; this phosphorylation reduces DNA-binding. Present in leaves and roots.

The protein localises to the plastid. Its subcellular location is the chloroplast stroma. The protein resides in the chloroplast nucleoid. It is found in the plastid stroma. The enzyme catalyses hydrogen sulfide + 6 oxidized [2Fe-2S]-[ferredoxin] + 3 H2O = sulfite + 6 reduced [2Fe-2S]-[ferredoxin] + 7 H(+). Its function is as follows. Essential protein with sulfite reductase activity required in assimilatory sulfate reduction pathway during both primary and secondary metabolism and thus involved in development and growth. DNA-binding protein that binds to both double-stranded and single-stranded DNA without significant sequence specificity to reversibly repress the transcriptional activity of chloroplast nucleoids by promoting DNA compaction and possibly regulate DNA replication. In Arabidopsis thaliana (Mouse-ear cress), this protein is Assimilatory sulfite reductase (ferredoxin), chloroplastic (SIR).